The chain runs to 245 residues: DNA repair protein RecO (245 aa).

Belongs to the RecO family.

Functionally, involved in DNA repair and RecF pathway recombination. This chain is DNA repair protein RecO, found in Porphyromonas gingivalis (strain ATCC 33277 / DSM 20709 / CIP 103683 / JCM 12257 / NCTC 11834 / 2561).